Reading from the N-terminus, the 369-residue chain is UDP-N-acetylglucosamine--N-acetylmuramyl-(pentapeptide) pyrophosphoryl-undecaprenol N-acetylglucosamine transferase (369 aa).

Residues 15–17, N126, R169, S197, and Q299 contribute to the UDP-N-acetyl-alpha-D-glucosamine site; that span reads TGG.

This sequence belongs to the glycosyltransferase 28 family. MurG subfamily.

It is found in the cell inner membrane. The catalysed reaction is di-trans,octa-cis-undecaprenyl diphospho-N-acetyl-alpha-D-muramoyl-L-alanyl-D-glutamyl-meso-2,6-diaminopimeloyl-D-alanyl-D-alanine + UDP-N-acetyl-alpha-D-glucosamine = di-trans,octa-cis-undecaprenyl diphospho-[N-acetyl-alpha-D-glucosaminyl-(1-&gt;4)]-N-acetyl-alpha-D-muramoyl-L-alanyl-D-glutamyl-meso-2,6-diaminopimeloyl-D-alanyl-D-alanine + UDP + H(+). It participates in cell wall biogenesis; peptidoglycan biosynthesis. In terms of biological role, cell wall formation. Catalyzes the transfer of a GlcNAc subunit on undecaprenyl-pyrophosphoryl-MurNAc-pentapeptide (lipid intermediate I) to form undecaprenyl-pyrophosphoryl-MurNAc-(pentapeptide)GlcNAc (lipid intermediate II). The protein is UDP-N-acetylglucosamine--N-acetylmuramyl-(pentapeptide) pyrophosphoryl-undecaprenol N-acetylglucosamine transferase of Methylobacterium radiotolerans (strain ATCC 27329 / DSM 1819 / JCM 2831 / NBRC 15690 / NCIMB 10815 / 0-1).